The sequence spans 213 residues: Small ribosomal subunit protein uS5 (213 aa).

Residues 1-41 form a disordered region; the sequence is MSGRERNGGRSAENNDKKERNERNGRNDRGGRNDRRNQQDE. In terms of domain architecture, S5 DRBM spans 45–108; that stretch reads FIERVVTINR…EEARKNFFRV (64 aa).

This sequence belongs to the universal ribosomal protein uS5 family. In terms of assembly, part of the 30S ribosomal subunit. Contacts proteins S4 and S8.

With S4 and S12 plays an important role in translational accuracy. In terms of biological role, located at the back of the 30S subunit body where it stabilizes the conformation of the head with respect to the body. The sequence is that of Small ribosomal subunit protein uS5 from Corynebacterium jeikeium (strain K411).